The chain runs to 2193 residues: ATP-dependent helicase BRM (2193 aa).

N-acetylmethionine is present on Met1. Gly residues predominate over residues 1–10; the sequence is MQSGGSGGGP. Disordered regions lie at residues 1 to 126, 175 to 231, 293 to 466, 511 to 558, and 580 to 649; these read MQSG…QEGQ, MQDL…PGNM, QKAG…GFTK, SPAI…DNVG, and TSTD…ASAR. Residues 23 to 62 are compositionally biased toward low complexity; sequence ASTSSAASPSSSSSSVQQQQQQQQQQQQQQQLASRQQQQQ. Residues 38–58 adopt a coiled-coil conformation; that stretch reads VQQQQQQQQQQQQQQQLASRQ. Gly residues predominate over residues 79–88; sequence GVQGMMGGGN. Low complexity-rich tracts occupy residues 91–102, 110–126, and 180–192; these read SSPGSMQMPQQS, QQQQ…QEGQ, and PSSQ…SKPS. The span at 204-223 shows a compositional bias: polar residues; the sequence is ESSSQQRNETKSHPQQQVGT. The segment covering 301–320 has biased composition (low complexity); sequence ASQSPSIPISSQPASSSVVP. Polar residues-rich tracts occupy residues 325 to 339, 347 to 358, 383 to 412, and 421 to 433; these read PHAN…QSGS, STGSFASTSSPR, QPTN…STKK, and QMQQ…TPTP. Residues 445–463 are compositionally biased toward low complexity; the sequence is SNSSLQSGQGTQQAQQRSG. Residues 463-499 form the QLQ domain; that stretch reads GFTKQQLHVLKAQILAFRRLKKGEGSLPPELLQAISP. Basic and acidic residues-rich tracts occupy residues 517-537 and 611-621; these read VQDR…ECGK and PRSDSTADKGK. The span at 626–638 shows a compositional bias: polar residues; the sequence is DGSQSKVPPQANS. The Nuclear localization signal 1 signature appears at 705–712; the sequence is LKKINGLL. Residues 726–795 adopt a coiled-coil conformation; that stretch reads VLRLQIEEKK…QKAVREKQLK (70 aa). The region spanning 993–1158 is the Helicase ATP-binding domain; it reads LSLYNNKLNG…WSLLNLLLPD (166 aa). 1006 to 1013 contributes to the ATP binding site; it reads DEMGLGKT. A coiled-coil region spans residues 1109-1129; the sequence is DEAQRMKDRESVLARDLDRYR. Residues 1312–1489 enclose the Helicase C-terminal domain; the sequence is ILDRILIKLQ…QYKIDMADEV (178 aa). Disordered regions lie at residues 1583-1775 and 1789-1894; these read SKKP…DEEQ and LRPR…NAGA. The span at 1608-1617 shows a compositional bias: basic residues; that stretch reads KRGRPKSKKI. The stretch at 1618–1638 forms a coiled coil; sequence NYKEIEDDIAGYSEESSEERN. Ser1641 bears the Phosphoserine mark. Positions 1642–1657 are enriched in acidic residues; it reads GNEEEGDIRQFDDDEL. Over residues 1821 to 1832 the composition is skewed to basic and acidic residues; the sequence is TVVDSHSSRQDQ. The segment covering 1833–1842 has biased composition (low complexity); that stretch reads SDSSSRLRSV. 2 stretches are compositionally biased toward polar residues: residues 1848-1870 and 1882-1892; these read ASTS…QLTV and DGTSPISSSNA. In terms of domain architecture, Bromo spans 1895 to 2005; it reads RMSHIIQKRC…NLFFDLLKMS (111 aa). The Nuclear localization signal 2 signature appears at 1901-1908; it reads QKRCKIVI. Over residues 2022–2032 the composition is skewed to polar residues; sequence GSAPTLVSTPT. Residues 2022–2193 are disordered; sequence GSAPTLVSTP…DSGKRRPSHL (172 aa). The residue at position 2137 (Ser2137) is a Phosphoserine. A compositionally biased stretch (polar residues) spans 2149–2166; sequence LAQQQRWPNQPTHPNNSG.

Belongs to the SNF2/RAD54 helicase family. Interacts with SWI3B, SWI3C, H3 and H4, but not with SWI3A, SWI3D or BSH. Interacts with LFY. Interacts with REF6. Binds to FGT1. As to expression, highly expressed in inflorescences and leaves. Low expression in siliques, roots and seedlings. Detected in shoot apical meristem, root meristem, vascular tissue of developing leaves, petals, stamens filaments, anthers and carpels.

The protein localises to the nucleus. It carries out the reaction ATP + H2O = ADP + phosphate + H(+). Functionally, ATPase subunit of a multiprotein complex equivalent of the SWI/SNF complex that acts by remodeling the chromatin by catalyzing an ATP-dependent alteration in the structure of nucleosomal DNA. Represses embryonic genes in leaves and controls shoot development and flowering. Activates flower homeotic genes. The association of BRM with its target genes requires REF6. Necessary to acquire heat stress (HS) memory, by globally binding to HS memory genes. In Arabidopsis thaliana (Mouse-ear cress), this protein is ATP-dependent helicase BRM.